Reading from the N-terminus, the 184-residue chain is Cell division protein ZapC (184 aa).

It belongs to the ZapC family. Interacts directly with FtsZ.

The protein resides in the cytoplasm. In terms of biological role, contributes to the efficiency of the cell division process by stabilizing the polymeric form of the cell division protein FtsZ. Acts by promoting interactions between FtsZ protofilaments and suppressing the GTPase activity of FtsZ. This Idiomarina loihiensis (strain ATCC BAA-735 / DSM 15497 / L2-TR) protein is Cell division protein ZapC.